A 123-amino-acid polypeptide reads, in one-letter code: Large ribosomal subunit protein uL24 (123 aa).

This sequence belongs to the universal ribosomal protein uL24 family. In terms of assembly, part of the 50S ribosomal subunit.

Functionally, one of two assembly initiator proteins, it binds directly to the 5'-end of the 23S rRNA, where it nucleates assembly of the 50S subunit. Located at the polypeptide exit tunnel on the outside of the subunit. The polypeptide is Large ribosomal subunit protein uL24 (Pyrobaculum islandicum (strain DSM 4184 / JCM 9189 / GEO3)).